The primary structure comprises 322 residues: Mas-related G-protein coupled receptor member X1 (322 aa).

Over 1 to 30 (MDPTISSHDTESTPLNETGHPNCTPILTLS) the chain is Extracellular. Residue asparagine 16 is glycosylated (N-linked (GlcNAc...) asparagine). Residues 31–51 (FLVLITTLVGLAGNTIVLWLL) traverse the membrane as a helical segment. Topologically, residues 52-59 (GFRMRRKA) are cytoplasmic. Residues 60–80 (ISVYILNLALADSFFLCCHFI) traverse the membrane as a helical segment. Residues 81–100 (DSLLRIIDFYGLYAHKLSKD) are Extracellular-facing. Residues 101-121 (ILGNAAIIPYISGLSILSAIS) traverse the membrane as a helical segment. At 122 to 142 (TERCLCVLWPIWYHCHRPRNM) the chain is on the cytoplasmic side. A helical membrane pass occupies residues 143-163 (SAIICALIWVLSFLMGILDWF). Over 164-179 (SGFLGETHHHLWKNVD) the chain is Extracellular. A helical membrane pass occupies residues 180-200 (FIITAFLIFLFMLLSGSSLAL). Residues 201 to 223 (LLRILCGPRRKPLSRLYVTIALT) lie on the Cytoplasmic side of the membrane. Residues 224 to 244 (VMVYLICGLPLGLYLFLLYWF) form a helical membrane-spanning segment. Residues 245-257 (GVHLHYPFCHIYQ) lie on the Extracellular side of the membrane. Residues 258–278 (VTAVLSCVNSSANPIIYFLVG) form a helical membrane-spanning segment. Over 279–322 (SFRQHRKHRSLKRVLKRALEDTPEEDEYTDSHLHKTTEISESRY) the chain is Cytoplasmic.

It belongs to the G-protein coupled receptor 1 family. Mas subfamily. Expressed in a subset of IB4-positive small diameter nociceptive dorsal root neurons.

It localises to the cell membrane. Orphan receptor activated by neuropeptides terminating in Arg-Phe or Arg-Phe-amide. Mediates its action by association with G proteins that activate a phosphatidylinositol-calcium second messenger system. Its effect is mediated by G(q) and G(11) proteins. May regulate the function of nociceptive neurons by modulation of pain perception. This Mus musculus (Mouse) protein is Mas-related G-protein coupled receptor member X1.